Reading from the N-terminus, the 221-residue chain is Probable septum site-determining protein MinC (221 aa).

Belongs to the MinC family. Interacts with MinD and FtsZ.

Functionally, cell division inhibitor that blocks the formation of polar Z ring septums. Rapidly oscillates between the poles of the cell to destabilize FtsZ filaments that have formed before they mature into polar Z rings. Prevents FtsZ polymerization. The chain is Probable septum site-determining protein MinC from Aliivibrio fischeri (strain MJ11) (Vibrio fischeri).